A 403-amino-acid chain; its full sequence is Histidine decarboxylase (403 aa).

His-120 provides a ligand contact to substrate. N6-(pyridoxal phosphate)lysine is present on Lys-233.

It belongs to the group II decarboxylase family. In terms of assembly, homotetramer. Pyridoxal 5'-phosphate is required as a cofactor.

It carries out the reaction L-histidine + H(+) = histamine + CO2. The sequence is that of Histidine decarboxylase from Pseudomonas entomophila (strain L48).